Consider the following 84-residue polypeptide: MDRRLSKKEEERIVNELNKLQMIEMVDTSVNLTNKCFQSCITNFRIRKLDDEEQLCVYKCVEKNMFFTSALNNHFMKLSNEGMF.

Residues 36-60 carry the Twin CX3C motif motif; that stretch reads CFQSCITNFRIRKLDDEEQLCVYKC. Intrachain disulfides connect Cys36/Cys60 and Cys40/Cys56.

The protein belongs to the small Tim family. In terms of assembly, heterohexamer; composed of 3 copies of timm9 and 3 copies of timm10, named soluble 70 kDa complex. Associates directly with the TIM22 complex, whose core is composed of timm22. Interacts with the transmembrane regions of multi-pass transmembrane proteins in transit.

The protein localises to the mitochondrion inner membrane. Its function is as follows. Component of the TIM22 complex, a complex that mediates the import and insertion of multi-pass transmembrane proteins into the mitochondrial inner membrane. The TIM22 complex forms a twin-pore translocase that uses the membrane potential as external driving force. This chain is Mitochondrial import inner membrane translocase subunit Tim9 (timm9), found in Dictyostelium discoideum (Social amoeba).